Reading from the N-terminus, the 159-residue chain is MPLYEHVFLARQDASTQQVEELTTQITGVIEGLGGKVTKTEAWGLRSLTYRMNKNRKAHFVLLNIDGPSAVVSEIERQERINEDIVRYLTVRVDEHEEGPSAMMRKADRDRERDDRGPREGGFRGDREGRGDREGGGFRGDRGPRRPREDADTAAASEE.

Basic and acidic residues predominate over residues 93–151 (VDEHEEGPSAMMRKADRDRERDDRGPREGGFRGDREGRGDREGGGFRGDRGPRRPREDA). The tract at residues 93–159 (VDEHEEGPSA…DADTAAASEE (67 aa)) is disordered.

Belongs to the bacterial ribosomal protein bS6 family.

Functionally, binds together with bS18 to 16S ribosomal RNA. The protein is Small ribosomal subunit protein bS6 of Rhodopseudomonas palustris (strain HaA2).